The primary structure comprises 512 residues: Sucrose transport protein SUC2 (512 aa).

Topologically, residues 1-31 are cytoplasmic; it reads MVSHPMEKAANGASALETQTGELDQPERLRK. Residues 32-52 traverse the membrane as a helical segment; the sequence is IISVSSIAAGVQFGWALQLSL. Residues 53 to 65 are Extracellular-facing; the sequence is LTPYVQLLGIPHK. The helical transmembrane segment at 66–86 threads the bilayer; it reads WASLIWLCGPISGMLVQPIVG. Over 87–100 the chain is Cytoplasmic; that stretch reads YHSDRCTSRFGRRR. The chain crosses the membrane as a helical span at residues 101–121; it reads PFIVAGAGLVTVAVFLIGYAA. Over 122-138 the chain is Extracellular; the sequence is DIGHSMGDQLDKPPKTR. The helical transmembrane segment at 139–159 threads the bilayer; the sequence is AIAIFALGFWILDVANNTLQG. At 160–177 the chain is on the cytoplasmic side; it reads PCRAFLADLSAGNAKKTR. A helical membrane pass occupies residues 178-198; that stretch reads TANAFFSFFMAVGNVLGYAAG. At 199 to 223 the chain is on the extracellular side; that stretch reads SYRNLYKVVPFTMTESCDLYCANLK. The helical transmembrane segment at 224-244 threads the bilayer; that stretch reads TCFFLSITLLLIVTFVSLCYV. The Cytoplasmic segment spans residues 245 to 278; it reads KEKPWTPEPTADGKASNVPFFGEIFGAFKELKRP. A helical transmembrane segment spans residues 279-299; that stretch reads MWMLLIVTALNWIAWFPFLLF. Residues 300 to 332 are Extracellular-facing; that stretch reads DTDWMGREVYGGNSDATATAASKKLYNDGVRAG. Residues 333-353 traverse the membrane as a helical segment; it reads ALGLMLNAIVLGFMSLGVEWI. Over 354-362 the chain is Cytoplasmic; it reads GRKLGGAKR. The chain crosses the membrane as a helical span at residues 363–383; that stretch reads LWGIVNFILAICLAMTVVVTK. Over 384–407 the chain is Extracellular; that stretch reads QAENHRRDHGGAKTGPPGNVTAGA. The N-linked (GlcNAc...) asparagine glycan is linked to Asn-402. The chain crosses the membrane as a helical span at residues 408 to 428; the sequence is LTLFAILGIPQAITFSIPFAL. The Cytoplasmic segment spans residues 429–440; that stretch reads ASIFSTNSGAGQ. Residues 441–461 form a helical membrane-spanning segment; it reads GLSLGVLNLAIVVPQMVISVG. At 462 to 473 the chain is on the extracellular side; that stretch reads GGPFDELFGGGN. Residues 474–494 traverse the membrane as a helical segment; it reads IPAFVLGAIAAAVSGVLALTV. At 495 to 512 the chain is on the cytoplasmic side; sequence LPSPPPDAPAFKATMGFH.

It belongs to the glycoside-pentoside-hexuronide (GPH) cation symporter transporter (TC 2.A.2.4) family. Homodimer. Interacts with SUC3 and SUC4. Expressed in leaves and, to a lower extent, in roots, flowers and stems. Highly specific to the phloem, exclusively localized in companion cells (at protein level).

It localises to the cell membrane. It carries out the reaction sucrose(out) + H(+)(out) = sucrose(in) + H(+)(in). Its pathway is glycan biosynthesis; sucrose metabolism. Inhibited by protonophores (e.g. dinitrophenol and carbonyl cyanide m-chlorophenyl-hydrazone (CCCP)) and SH group inhibitors (e.g. N-ethylmaleimide (NEM) and p-chloromercuriphenyl sulphonic acid (PCMPS)). Responsible for the transport of sucrose into the cell, with the concomitant uptake of protons (symport system). Can also transport other glucosides such as maltose, arbutin (hydroquinone-beta-D-glucoside), salicin (2-(hydroxymethyl)phenyl-beta-D-glucoside), alpha-phenylglucoside, beta-phenylglucoside, alpha-paranitrophenylglucoside, beta-paranitrophenylglucoside, and paranitrophenyl-beta-thioglucoside. May also transport biotin. Required for apoplastic phloem sucrose loading in source tissues (e.g. leaves) in order to transport it to sink tissues (e.g. roots, flowers). The protein is Sucrose transport protein SUC2 of Arabidopsis thaliana (Mouse-ear cress).